The sequence spans 682 residues: Acetyl-coenzyme A synthetase 2-like, mitochondrial (682 aa).

Residues 1–38 (MAARSLGSGVGRLLRGLQGRSGQSGWSLSVSRSTATRL) constitute a mitochondrion transit peptide. CoA-binding positions include 217 to 220 (RGGR) and Thr-334. An N6-acetyllysine modification is found at Lys-389. ATP contacts are provided by residues 410 to 412 (GEP), 434 to 439 (DTWWQT), Asp-526, and Arg-541. Residue Ser-549 participates in CoA binding. Position 552 (Arg-552) interacts with ATP. Residue Lys-635 is modified to N6-acetyllysine.

The protein belongs to the ATP-dependent AMP-binding enzyme family. In terms of assembly, interacts with SIRT3. Post-translationally, reversibly acetylated at Lys-635. The acetyl-CoA synthase activity is inhibited by acetylation and activated by deacetylation mediated by the deacetylase SIRT3. In terms of tissue distribution, highly expressed in heart, testis, kidney, skeletal muscle, lung and spleen. Detected at low levels in brain.

Its subcellular location is the mitochondrion matrix. The catalysed reaction is acetate + ATP + CoA = acetyl-CoA + AMP + diphosphate. The enzyme catalyses propanoate + ATP + CoA = propanoyl-CoA + AMP + diphosphate. Inhibited by acetylation at Lys-635 and activated by deacetylation mediated by the deacetylase SIRT3. Functionally, catalyzes the synthesis of acetyl-CoA from short-chain fatty acids. Acetate is the preferred substrate. Can also utilize propionate with a much lower affinity. Provides acetyl-CoA that is utilized mainly for oxidation under ketogenic conditions. Involved in thermogenesis under ketogenic conditions, using acetate as a vital fuel when carbohydrate availability is insufficient. This Mus musculus (Mouse) protein is Acetyl-coenzyme A synthetase 2-like, mitochondrial (Acss1).